Reading from the N-terminus, the 90-residue chain is Co-chaperonin GroES (90 aa).

Belongs to the GroES chaperonin family. In terms of assembly, heptamer of 7 subunits arranged in a ring. Interacts with the chaperonin GroEL.

The protein localises to the cytoplasm. In terms of biological role, together with the chaperonin GroEL, plays an essential role in assisting protein folding. The GroEL-GroES system forms a nano-cage that allows encapsulation of the non-native substrate proteins and provides a physical environment optimized to promote and accelerate protein folding. GroES binds to the apical surface of the GroEL ring, thereby capping the opening of the GroEL channel. The sequence is that of Co-chaperonin GroES from Helicobacter hepaticus (strain ATCC 51449 / 3B1).